A 341-amino-acid chain; its full sequence is tRNA N6-adenosine threonylcarbamoyltransferase (341 aa).

Fe cation contacts are provided by His-111 and His-115. Residues 134 to 138, Asp-167, Gly-180, and Asn-276 each bind substrate; that span reads LVSGG. Asp-304 is a binding site for Fe cation.

Belongs to the KAE1 / TsaD family. Fe(2+) is required as a cofactor.

It is found in the cytoplasm. It carries out the reaction L-threonylcarbamoyladenylate + adenosine(37) in tRNA = N(6)-L-threonylcarbamoyladenosine(37) in tRNA + AMP + H(+). In terms of biological role, required for the formation of a threonylcarbamoyl group on adenosine at position 37 (t(6)A37) in tRNAs that read codons beginning with adenine. Is involved in the transfer of the threonylcarbamoyl moiety of threonylcarbamoyl-AMP (TC-AMP) to the N6 group of A37, together with TsaE and TsaB. TsaD likely plays a direct catalytic role in this reaction. This Pseudomonas paraeruginosa (strain DSM 24068 / PA7) (Pseudomonas aeruginosa (strain PA7)) protein is tRNA N6-adenosine threonylcarbamoyltransferase.